A 182-amino-acid polypeptide reads, in one-letter code: ATP synthase subunit delta (182 aa).

The protein belongs to the ATPase delta chain family. F-type ATPases have 2 components, F(1) - the catalytic core - and F(0) - the membrane proton channel. F(1) has five subunits: alpha(3), beta(3), gamma(1), delta(1), epsilon(1). F(0) has three main subunits: a(1), b(2) and c(10-14). The alpha and beta chains form an alternating ring which encloses part of the gamma chain. F(1) is attached to F(0) by a central stalk formed by the gamma and epsilon chains, while a peripheral stalk is formed by the delta and b chains.

It localises to the cell membrane. In terms of biological role, f(1)F(0) ATP synthase produces ATP from ADP in the presence of a proton or sodium gradient. F-type ATPases consist of two structural domains, F(1) containing the extramembraneous catalytic core and F(0) containing the membrane proton channel, linked together by a central stalk and a peripheral stalk. During catalysis, ATP synthesis in the catalytic domain of F(1) is coupled via a rotary mechanism of the central stalk subunits to proton translocation. This protein is part of the stalk that links CF(0) to CF(1). It either transmits conformational changes from CF(0) to CF(1) or is implicated in proton conduction. The chain is ATP synthase subunit delta from Lachnoclostridium phytofermentans (strain ATCC 700394 / DSM 18823 / ISDg) (Clostridium phytofermentans).